Consider the following 459-residue polypeptide: uncharacterized protein (459 aa).

The next 12 helical transmembrane spans lie at 25–45 (SYGF…IYLL), 52–72 (AGIP…FAAI), 95–115 (PYLL…FLSP), 123–143 (LIYA…VNIP), 167–187 (IGSL…LVKF), 192–212 (VGYP…FYIC), 249–269 (VLMT…LVYF), 279–299 (LMAY…VFLP), 310–330 (TAMI…MLPS), 332–352 (VYVF…PNGI), 389–409 (SLSG…PNAV), and 420–440 (ALLL…IGFL).

It belongs to the sodium:galactoside symporter (TC 2.A.2) family.

It localises to the cell membrane. This is an uncharacterized protein from Bacillus subtilis (strain 168).